Consider the following 436-residue polypeptide: Divalent metal cation transporter MntH (436 aa).

Basic and acidic residues predominate over residues 1–22 (MDSRSPSLPDDRPDPPEQHLDA). The tract at residues 1–31 (MDSRSPSLPDDRPDPPEQHLDARAGATLRGT) is disordered. 11 consecutive transmembrane segments (helical) span residues 40–60 (ILPF…PGNF), 71–91 (GYSL…IQNL), 115–135 (LVWF…LAEF), 144–164 (LLTG…TFWL), 177–197 (LAVG…VVLA), 216–236 (GSAY…VIYL), 264–284 (VIAA…VAAA), 304–324 (LTPL…LASG), 354–374 (LITM…SSVL), 375–395 (ILSQ…LLLF), and 411–431 (FTVI…YLLW).

It belongs to the NRAMP family.

The protein localises to the cell membrane. H(+)-stimulated, divalent metal cation uptake system. In Deinococcus radiodurans (strain ATCC 13939 / DSM 20539 / JCM 16871 / CCUG 27074 / LMG 4051 / NBRC 15346 / NCIMB 9279 / VKM B-1422 / R1), this protein is Divalent metal cation transporter MntH.